Consider the following 156-residue polypeptide: MIP18 family protein galla-2 (156 aa).

Belongs to the MIP18 family. In terms of assembly, component of the CGX complex composed of crb, galla (galla-1 or galla-2) and Xpd. Interacts with crb (via intracellular domain). Also able to interact with Xpd in the absence of crb. Interacts with Mms19.

Component of the crb-galla-Xpd (CGX) complex which is essential for proper mitotic chromosome segregation in early embryos. The CGX complex is also required for cell proliferation in developing wing disks. In the CGX complex, acts with crb to recruit Xpd thus forming the functional complex. The protein is MIP18 family protein galla-2 of Drosophila melanogaster (Fruit fly).